The primary structure comprises 438 residues: V-type ATP synthase beta chain (438 aa).

This sequence belongs to the ATPase alpha/beta chains family.

Functionally, produces ATP from ADP in the presence of a proton gradient across the membrane. The V-type beta chain is a regulatory subunit. In Chlamydia muridarum (strain MoPn / Nigg), this protein is V-type ATP synthase beta chain (atpB).